Reading from the N-terminus, the 186-residue chain is Large ribosomal subunit protein uL5c (186 aa).

This sequence belongs to the universal ribosomal protein uL5 family. Part of the 50S ribosomal subunit; contacts the 5S rRNA.

It is found in the plastid. It localises to the chloroplast. Binds 5S rRNA, forms part of the central protuberance of the 50S subunit. The protein is Large ribosomal subunit protein uL5c (rpl5) of Pleurastrum terricola (Filamentous green alga).